A 601-amino-acid polypeptide reads, in one-letter code: Putative purine permease C1399.01c (601 aa).

12 helical membrane-spanning segments follow: residues 64–84, 102–122, 131–151, 179–199, 207–227, 264–284, 294–314, 337–357, 424–444, 450–470, 481–501, and 522–542; these read VPVL…VGGV, TNYL…IQIA, YYIG…VSVA, YGAF…MSFI, LFPP…LISS, GWGS…IIII, TTSV…TGYW, IYGP…MEAI, FFCA…AVFV, VLGG…IAII, FILT…DWFT, and LVME…NLIL.

It belongs to the nucleobase:cation symporter-2 (NCS2) (TC 2.A.40) family.

It localises to the vacuole membrane. The sequence is that of Putative purine permease C1399.01c from Schizosaccharomyces pombe (strain 972 / ATCC 24843) (Fission yeast).